The following is a 537-amino-acid chain: MVKKSENPKEWYNEIVRKANIIDDAYPVKGMPVYKPYGYKAFKFLMSLLENKLESIGAEPAWFPIVIPYSIFKKESEHIKGFEEEVFWIERAGNDKLEDPLILRPTSETEMYYMFAKWIESYRDLPLIIYMTNTVYRYETKSTKALIRGREVLWNETHSVHRSEEDAREHMAKAKEVYDYIFWDVLYLPYIWVRRPEWDKFPGGEETYAADAIMPDGRFLQVGTIHLLGQKFAIPFEIKFLDYHPFYKKYGDPNIYIKDKNGNEYKVHAPKEFWEELEKGKLTKTYTIKIGDKEYTISSIEEINEKLKEYDFRKYVWQTSYGISMRAFGGALYWLGDDLGLVMPYKIAPIQIVIIPILGKDDTKVIEYSKKVYELIKDKYRVYLDSDDTKTPGYKYYYYDLIGVPLRIDIGLKEVENNSITIVRRDNKKKYTISLNELEKIDQIFKEMEEDLKQKAKSFVNDMVVRVKTFDELKEAIEQNKIAKAPFCMRESCANQIKELLHAEVRGTDINPENAEKERCVYCGEPAKYWVYIGKTY.

The protein belongs to the class-II aminoacyl-tRNA synthetase family. ProS type 3 subfamily. As to quaternary structure, homodimer.

Its subcellular location is the cytoplasm. It carries out the reaction tRNA(Pro) + L-proline + ATP = L-prolyl-tRNA(Pro) + AMP + diphosphate. In terms of biological role, catalyzes the attachment of proline to tRNA(Pro) in a two-step reaction: proline is first activated by ATP to form Pro-AMP and then transferred to the acceptor end of tRNA(Pro). The polypeptide is Proline--tRNA ligase (Nanoarchaeum equitans (strain Kin4-M)).